A 131-amino-acid polypeptide reads, in one-letter code: Small ribosomal subunit protein uS9 (131 aa).

Belongs to the universal ribosomal protein uS9 family.

The chain is Small ribosomal subunit protein uS9 from Actinobacillus succinogenes (strain ATCC 55618 / DSM 22257 / CCUG 43843 / 130Z).